The following is a 645-amino-acid chain: Chlorophyllide a oxygenase, chloroplastic (645 aa).

Residues 1-46 (MLPASLQRKAAAVGGRGPTNQSRVAVRVSAQPKEAPPASTPIVEDP) are disordered. Positions 105–218 (QARQKLEYLR…RKASDLDIKE (114 aa)) form a coiled coil. The segment at 258–287 (ATTVTQEVPSTSYGTPVDRAPRRSKAAIRR) is disordered. Residues 259–271 (TTVTQEVPSTSYG) are compositionally biased toward polar residues. Residues 305 to 406 (WYPAEFSARL…CAEKDGFIWV (102 aa)) form the Rieske domain. Positions 346, 348, 365, and 368 each coordinate [2Fe-2S] cluster. Residues Glu446, Asp450, His453, and His458 each coordinate Fe cation.

The protein resides in the plastid. The protein localises to the chloroplast inner membrane. It localises to the chloroplast thylakoid membrane. The enzyme catalyses chlorophyllide a + 2 NADPH + 2 O2 + 2 H(+) = chlorophyllide b + 2 NADP(+) + 3 H2O. In terms of biological role, catalyzes a two-step oxygenase reaction involved in the synthesis of chlorophyll b. Acts specifically on the non-esterified chlorophyllide a and not on chlorophyll a. This chain is Chlorophyllide a oxygenase, chloroplastic (CAO), found in Chlamydomonas reinhardtii (Chlamydomonas smithii).